The primary structure comprises 218 residues: Glutathione S-transferase Mu 2 (218 aa).

The 87-residue stretch at 2–88 (PMTLGYWDIR…YLARKHNLCG (87 aa)) folds into the GST N-terminal domain. Position 7–8 (7–8 (YW)) interacts with glutathione. A phosphoserine mark is found at Ser-27 and Ser-44. Residues 43 to 46 (RSQW), Lys-50, 59 to 60 (NL), and 72 to 73 (QS) each bind glutathione. In terms of domain architecture, GST C-terminal spans 90–208 (TEEERIRVDI…KSSRFLSKPI (119 aa)). Position 116 (Tyr-116) interacts with substrate. Ser-117 is modified (phosphoserine).

This sequence belongs to the GST superfamily. Mu family. As to quaternary structure, homodimer.

Its subcellular location is the cytoplasm. It carries out the reaction RX + glutathione = an S-substituted glutathione + a halide anion + H(+). The enzyme catalyses 11(S)-hydroxy-14(S),15(S)-epoxy-(5Z,8Z,12E)-eicosatrienoate + glutathione = (11S,15S)-dihydroxy-14(R)-S-glutathionyl-(5Z,8Z,12E)-eicosatrienoate. In terms of biological role, conjugation of reduced glutathione to a wide number of exogenous and endogenous hydrophobic electrophiles. Participates in the formation of novel hepoxilin regioisomers. The polypeptide is Glutathione S-transferase Mu 2 (Mus musculus (Mouse)).